The following is a 919-amino-acid chain: TRPM8 channel-associated factor 2 (919 aa).

A Peptidase M60 domain is found at 543 to 842 (DVWMSTGLYL…TYLQLQEVFG (300 aa)).

This sequence belongs to the TCAF family. Interacts with TRPM8 (via N-terminus and C-terminus domains); the interaction inhibits TRPM8 channel activity. Interacts with TRPV6.

The protein localises to the cell membrane. Functionally, negatively regulates the plasma membrane cation channel TRPM8 activity. Involved in the recruitment of TRPM8 to the cell surface. Promotes prostate cancer cell migration stimulation in a TRPM8-dependent manner. This is TRPM8 channel-associated factor 2 from Mus musculus (Mouse).